Consider the following 153-residue polypeptide: Putative WASP homolog-associated protein with actin, membranes and microtubules-like protein 1 (153 aa).

A coiled-coil region spans residues 113–151; it reads AIQFYEIQLELYEVKFEILKNKEILLTTQLDSLERLIKD.

The chain is Putative WASP homolog-associated protein with actin, membranes and microtubules-like protein 1 (WHAMMP3) from Homo sapiens (Human).